The following is a 316-amino-acid chain: MRLDRVWVIYRADSQPAQREARQCAKELKALGSEVTTAMSGARVNPFPGLLATQEQLPDLAVVLGGDGTVLGAARHLAVHDIPILSINVGGHLGFLTHDRRVLRGDEIWQRLLNDQYAMERRMMLQAMVDRRSAEERADAPTPLQQPDVEDDDEHHWALNDFYLRAYRDEISPTCTLELEIDGEVVDQIRGDGLILSTPTGSTGYALAAGGPILHPGIDAIVVAPICPMSLSSRTVVVPPRARLVIWPLGAGDHRIKLWKDGVGCTVLEPGECCVVQQARHHAQMVQLNQSPSYYRTVASKLHWAGSLTAAQPSHN.

The active-site Proton acceptor is the Asp-67. 67–68 (DG) lines the NAD(+) pocket. The tract at residues 132-151 (RSAEERADAPTPLQQPDVED) is disordered. NAD(+) is bound by residues 160 to 161 (ND), Arg-190, and Asp-192.

Belongs to the NAD kinase family. The cofactor is a divalent metal cation.

The protein localises to the cytoplasm. It carries out the reaction NAD(+) + ATP = ADP + NADP(+) + H(+). In terms of biological role, involved in the regulation of the intracellular balance of NAD and NADP, and is a key enzyme in the biosynthesis of NADP. Catalyzes specifically the phosphorylation on 2'-hydroxyl of the adenosine moiety of NAD to yield NADP. This is NAD kinase 1 from Parasynechococcus marenigrum (strain WH8102).